We begin with the raw amino-acid sequence, 587 residues long: Arginine--tRNA ligase (587 aa).

Positions 126-136 (ANPTGPLHVGH) match the 'HIGH' region motif.

This sequence belongs to the class-I aminoacyl-tRNA synthetase family. In terms of assembly, monomer.

Its subcellular location is the cytoplasm. It carries out the reaction tRNA(Arg) + L-arginine + ATP = L-arginyl-tRNA(Arg) + AMP + diphosphate. This is Arginine--tRNA ligase from Aromatoleum aromaticum (strain DSM 19018 / LMG 30748 / EbN1) (Azoarcus sp. (strain EbN1)).